We begin with the raw amino-acid sequence, 176 residues long: Nucleoside triphosphate/diphosphate phosphatase (176 aa).

Residue arginine 23 is the Proton donor of the active site. Positions 87, 103, 105, 107, 120, and 123 each coordinate Mg(2+).

The protein belongs to the Ntdp family. Mg(2+) is required as a cofactor.

It carries out the reaction a ribonucleoside 5'-triphosphate + H2O = a ribonucleoside 5'-diphosphate + phosphate + H(+). It catalyses the reaction a ribonucleoside 5'-diphosphate + H2O = a ribonucleoside 5'-phosphate + phosphate + H(+). Has nucleoside phosphatase activity towards nucleoside triphosphates and nucleoside diphosphates. The polypeptide is Nucleoside triphosphate/diphosphate phosphatase (Bacillus cytotoxicus (strain DSM 22905 / CIP 110041 / 391-98 / NVH 391-98)).